Here is a 287-residue protein sequence, read N- to C-terminus: Intermediate filament family orphan 2 (287 aa).

The IF rod domain occupies 1 to 254; it reads MNLQTMVDTL…RLIKGSADRN (254 aa). The interval 248–287 is disordered; that stretch reads KGSADRNSPSPSSVASSDSGSTDEIQDDLEREADVEPMVS. Over residues 255-267 the composition is skewed to low complexity; sequence SPSPSSVASSDSG. A compositionally biased stretch (acidic residues) spans 271–287; the sequence is EIQDDLEREADVEPMVS.

Belongs to the intermediate filament family.

This Rattus norvegicus (Rat) protein is Intermediate filament family orphan 2 (Iffo2).